We begin with the raw amino-acid sequence, 417 residues long: Solanesyl diphosphate synthase 2, chloroplastic (417 aa).

A chloroplast-targeting transit peptide spans 1-60; sequence MMMSCRNIDLGTSVLDHSCSSSSTSRRFLFGNSSKTVCMIGGRSCVGNLVFLRRDLATCR. Isopentenyl diphosphate contacts are provided by Lys137, Arg140, and His175. The Mg(2+) site is built by Asp182 and Asp186. An an all-trans-polyprenyl diphosphate-binding site is contributed by Arg191. Arg192 is a binding site for isopentenyl diphosphate. An all-trans-polyprenyl diphosphate contacts are provided by Lys268, Thr269, Gln306, and Lys323.

It belongs to the FPP/GGPP synthase family. Homodimer. Interacts with FBN5. Mg(2+) is required as a cofactor. In terms of tissue distribution, higher expression in leaves than in roots.

It is found in the plastid. The protein resides in the chloroplast. The catalysed reaction is 5 isopentenyl diphosphate + (2E,6E,10E)-geranylgeranyl diphosphate = all-trans-nonaprenyl diphosphate + 5 diphosphate. Involved in providing solanesyl diphosphate for plastoquinone-9 (PQ-9) formation in plastids. Catalyzes the elongation of the prenyl side chain of PQ-9 in plastids. Contributes to the biosynthesis of plastochromanol-8 (PC-8) in plastids. Does not contribute to the synthesis of tocopherol or ubiquinone. PQ-9 and PC-8 are lipophilic antioxidants that act as protectant against photooxidative stress under high light stress conditions. Prefers geranylgeranyl diphosphate to farnesyl diphosphate as substrate. No activity with geranyl diphosphate or dimethylallyl diphosphate as substrate. In Arabidopsis thaliana (Mouse-ear cress), this protein is Solanesyl diphosphate synthase 2, chloroplastic.